The sequence spans 174 residues: Major allergen Can f 1 (174 aa).

A signal peptide spans 1 to 18; it reads MKTLLLTIGFSLIAILQA. Residues cysteine 78 and cysteine 169 are joined by a disulfide bond. Asparagine 80 carries an N-linked (GlcNAc...) asparagine glycan.

Belongs to the calycin superfamily. Lipocalin family. In terms of tissue distribution, tongue epithelial tissue.

It localises to the secreted. In Canis lupus familiaris (Dog), this protein is Major allergen Can f 1.